The following is a 348-amino-acid chain: Tetraacyldisaccharide 4'-kinase (348 aa).

ATP is bound at residue 65 to 72 (VAGGAGKT). A disordered region spans residues 89–117 (PGIVSRGHGSREREARPVSADSTAQSVGD).

This sequence belongs to the LpxK family.

It carries out the reaction a lipid A disaccharide + ATP = a lipid IVA + ADP + H(+). Its pathway is glycolipid biosynthesis; lipid IV(A) biosynthesis; lipid IV(A) from (3R)-3-hydroxytetradecanoyl-[acyl-carrier-protein] and UDP-N-acetyl-alpha-D-glucosamine: step 6/6. Transfers the gamma-phosphate of ATP to the 4'-position of a tetraacyldisaccharide 1-phosphate intermediate (termed DS-1-P) to form tetraacyldisaccharide 1,4'-bis-phosphate (lipid IVA). The chain is Tetraacyldisaccharide 4'-kinase from Leptothrix cholodnii (strain ATCC 51168 / LMG 8142 / SP-6) (Leptothrix discophora (strain SP-6)).